The following is a 1006-amino-acid chain: E3 ubiquitin-protein ligase MIB1 (1006 aa).

Residues 6–74 enclose the MIB/HERC2 1 domain; the sequence is NNRVMVEGVG…AYDLRILDSA (69 aa). Residues 80–132 form a ZZ-type zinc finger; the sequence is HDGTMCDTCRQQPIIGIRWKCAECTNYDLCTVCYHGDKHHLRHRFYRITTPGS. 8 residues coordinate Zn(2+): Cys85, Cys88, Cys100, Cys103, Cys109, Cys112, His118, and His122. The 79-residue stretch at 143-221 folds into the MIB/HERC2 2 domain; sequence SKKITARGIF…MSDLKCVQDA (79 aa). Ser408 carries the phosphoserine modification. 9 ANK repeats span residues 430–460, 463–492, 496–525, 529–558, 562–591, 595–627, 631–661, 665–694, and 698–729; these read DLNE…DVNG, AGHT…DVEA, DGDR…DLNA, RRQT…HPSL, EGDT…DVTI, NGFN…IVDE, DGYT…NLDI, NQQT…KLDI, and DGDT…KVDA. RING-type zinc fingers lie at residues 819–854 and 866–901; these read CMVC…LICK and CVVC…VQCR. Residues 935–962 adopt a coiled-coil conformation; it reads QKDKDNTNVNADVQKLQQQLQDIKEQTM. The segment at 963-996 adopts an RING-type 3 zinc-finger fold; sequence CPVCLDRLKNMIFLCGHGTCQLCGDRMSECPICR.

In terms of assembly, interacts with CEP131 and PCM1. Post-translationally, ubiquitinated; this modification is inhibited in response to cellular stress, such as ultraviolet light (UV) radiation or heat shock. Ubiquitinated; possibly via autoubiquitination. In terms of tissue distribution, detected in all tissues tested. Present in embryo, embryonic stem cells, bladder, skeletal muscle, bladder, uterus, testis, stomach, colon, ileum, trachea, lung, aorta, kidney, spleen, liver and vas deferens (at protein level). Highly expressed in testis.

The protein localises to the cytoplasm. The protein resides in the cytoskeleton. Its subcellular location is the microtubule organizing center. It localises to the centrosome. It is found in the centriolar satellite. The protein localises to the cell membrane. It carries out the reaction S-ubiquitinyl-[E2 ubiquitin-conjugating enzyme]-L-cysteine + [acceptor protein]-L-lysine = [E2 ubiquitin-conjugating enzyme]-L-cysteine + N(6)-ubiquitinyl-[acceptor protein]-L-lysine.. It participates in protein modification; protein ubiquitination. E3 ubiquitin-protein ligase that mediates ubiquitination of Delta receptors, which act as ligands of Notch proteins. Positively regulates the Delta-mediated Notch signaling by ubiquitinating the intracellular domain of Delta, leading to endocytosis of Delta receptors. Involved in ubiquitination of centriolar satellite CEP131, CEP290 and PCM1 proteins and hence inhibits primary cilium formation in proliferating cells. Mediates 'Lys-63'-linked polyubiquitination of TBK1, which probably participates in kinase activation. Probably mediates ubiquitination and subsequent proteasomal degradation of DAPK1, thereby antagonizing anti-apoptotic effects of DAPK1 to promote TNF-induced apoptosis. The chain is E3 ubiquitin-protein ligase MIB1 (Mib1) from Mus musculus (Mouse).